We begin with the raw amino-acid sequence, 114 residues long: Ribonuclease P protein component (114 aa).

This sequence belongs to the RnpA family. Consists of a catalytic RNA component (M1 or rnpB) and a protein subunit.

The catalysed reaction is Endonucleolytic cleavage of RNA, removing 5'-extranucleotides from tRNA precursor.. Functionally, RNaseP catalyzes the removal of the 5'-leader sequence from pre-tRNA to produce the mature 5'-terminus. It can also cleave other RNA substrates such as 4.5S RNA. The protein component plays an auxiliary but essential role in vivo by binding to the 5'-leader sequence and broadening the substrate specificity of the ribozyme. The sequence is that of Ribonuclease P protein component from Lactiplantibacillus plantarum (strain ATCC BAA-793 / NCIMB 8826 / WCFS1) (Lactobacillus plantarum).